The chain runs to 662 residues: DNA ligase (662 aa).

Residues 31–35 (DSEYD), 79–80 (SL), and Glu119 each bind NAD(+). Lys121 (N6-AMP-lysine intermediate) is an active-site residue. Arg142, Glu176, Lys288, and Lys312 together coordinate NAD(+). Cys405, Cys408, Cys421, and Cys427 together coordinate Zn(2+). The 80-residue stretch at 583-662 (NIEKKLDNLT…DELNSFLDNL (80 aa)) folds into the BRCT domain.

The protein belongs to the NAD-dependent DNA ligase family. LigA subfamily. It depends on Mg(2+) as a cofactor. Mn(2+) serves as cofactor.

It carries out the reaction NAD(+) + (deoxyribonucleotide)n-3'-hydroxyl + 5'-phospho-(deoxyribonucleotide)m = (deoxyribonucleotide)n+m + AMP + beta-nicotinamide D-nucleotide.. Its function is as follows. DNA ligase that catalyzes the formation of phosphodiester linkages between 5'-phosphoryl and 3'-hydroxyl groups in double-stranded DNA using NAD as a coenzyme and as the energy source for the reaction. It is essential for DNA replication and repair of damaged DNA. The chain is DNA ligase from Finegoldia magna (strain ATCC 29328 / DSM 20472 / WAL 2508) (Peptostreptococcus magnus).